Reading from the N-terminus, the 202-residue chain is MSASTSSHRPIKGILKNKSSSGSSVATSGQQSGGTIQDVKRKKSQKWDESSILAAHRATYRDYDLMKANEPGTSYMSVQDNGEDSVRDVEGEDSVRGVEGKEATDASDHSCEVDEQESSEAYMRKILLHKQEKKRQFEMRRRLHYNEELNIKLARQLMWKELQSEDNENEETPQGTNEEKTAAEESEEAPLTGGLQTQSCDP.

Disordered stretches follow at residues 1–51 (MSAS…DESS) and 71–118 (PGTS…EQES). Residues 12–17 (KGILKN) are required for binding PPP1CC. Positions 19-35 (SSSGSSVATSGQQSGGT) are enriched in low complexity. The segment at 43-55 (KSQKWDESSILAA) is required for binding PPP1CC. The segment covering 71 to 80 (PGTSYMSVQD) has biased composition (polar residues). Over residues 84–112 (DSVRDVEGEDSVRGVEGKEATDASDHSCE) the composition is skewed to basic and acidic residues. The segment at 144–147 (HYNE) is required for binding PPP1CC catalytic center, displacing metal ions and inhibition of PPP1CC catalytic activity. The interval 162–202 (LQSEDNENEETPQGTNEEKTAAEESEEAPLTGGLQTQSCDP) is disordered.

It belongs to the protein phosphatase inhibitor 2 family. As to expression, detected in sperm (at protein level).

Its function is as follows. Functions as a protein phosphatase inhibitor. It inhibits activity of the catalytic subunit of PP1 and weakly inhibits the activity of myosin-associated phosphates. The chain is Protein phosphatase inhibitor 2 family member C from Homo sapiens (Human).